A 121-amino-acid polypeptide reads, in one-letter code: Small ribosomal subunit protein uS13 (121 aa).

Positions 93–121 are disordered; the sequence is RKGLPVRGQKTKTNARTRKGKRKTVGAKS.

This sequence belongs to the universal ribosomal protein uS13 family. In terms of assembly, part of the 30S ribosomal subunit. Forms a loose heterodimer with protein S19. Forms two bridges to the 50S subunit in the 70S ribosome.

Functionally, located at the top of the head of the 30S subunit, it contacts several helices of the 16S rRNA. In the 70S ribosome it contacts the 23S rRNA (bridge B1a) and protein L5 of the 50S subunit (bridge B1b), connecting the 2 subunits; these bridges are implicated in subunit movement. Contacts the tRNAs in the A and P-sites. The polypeptide is Small ribosomal subunit protein uS13 (Campylobacter lari (strain RM2100 / D67 / ATCC BAA-1060)).